The following is a 384-amino-acid chain: Chaperone protein DnaJ (384 aa).

Positions 5–70 (DYYEILGVTR…QKKRIYDTYG (66 aa)) constitute a J domain. A CR-type zinc finger spans residues 134–212 (GTEKEIRLQT…CNGQGRTRQS (79 aa)). 8 residues coordinate Zn(2+): cysteine 147, cysteine 150, cysteine 164, cysteine 167, cysteine 186, cysteine 189, cysteine 200, and cysteine 203. 4 CXXCXGXG motif repeats span residues 147–154 (CEECNGSG), 164–171 (CPVCQGSG), 186–193 (CTRCQGMG), and 200–207 (CKTCNGQG). The segment at 352 to 384 (KEKSGEKVRKWPWSKRKDREKKSMAESTREART) is disordered.

Belongs to the DnaJ family. Homodimer. Zn(2+) serves as cofactor.

The protein resides in the cytoplasm. In terms of biological role, participates actively in the response to hyperosmotic and heat shock by preventing the aggregation of stress-denatured proteins and by disaggregating proteins, also in an autonomous, DnaK-independent fashion. Unfolded proteins bind initially to DnaJ; upon interaction with the DnaJ-bound protein, DnaK hydrolyzes its bound ATP, resulting in the formation of a stable complex. GrpE releases ADP from DnaK; ATP binding to DnaK triggers the release of the substrate protein, thus completing the reaction cycle. Several rounds of ATP-dependent interactions between DnaJ, DnaK and GrpE are required for fully efficient folding. Also involved, together with DnaK and GrpE, in the DNA replication of plasmids through activation of initiation proteins. In Syntrophobacter fumaroxidans (strain DSM 10017 / MPOB), this protein is Chaperone protein DnaJ.